Reading from the N-terminus, the 156-residue chain is Endoribonuclease YbeY (156 aa).

Residues H122, H126, and H132 each contribute to the Zn(2+) site.

This sequence belongs to the endoribonuclease YbeY family. The cofactor is Zn(2+).

Its subcellular location is the cytoplasm. In terms of biological role, single strand-specific metallo-endoribonuclease involved in late-stage 70S ribosome quality control and in maturation of the 3' terminus of the 16S rRNA. The chain is Endoribonuclease YbeY from Bacillus mycoides (strain KBAB4) (Bacillus weihenstephanensis).